A 361-amino-acid polypeptide reads, in one-letter code: UDP-3-O-acylglucosamine N-acyltransferase (361 aa).

The active-site Proton acceptor is the histidine 253.

This sequence belongs to the transferase hexapeptide repeat family. LpxD subfamily. Homotrimer.

It carries out the reaction a UDP-3-O-[(3R)-3-hydroxyacyl]-alpha-D-glucosamine + a (3R)-hydroxyacyl-[ACP] = a UDP-2-N,3-O-bis[(3R)-3-hydroxyacyl]-alpha-D-glucosamine + holo-[ACP] + H(+). Its pathway is bacterial outer membrane biogenesis; LPS lipid A biosynthesis. Its function is as follows. Catalyzes the N-acylation of UDP-3-O-acylglucosamine using 3-hydroxyacyl-ACP as the acyl donor. Is involved in the biosynthesis of lipid A, a phosphorylated glycolipid that anchors the lipopolysaccharide to the outer membrane of the cell. The polypeptide is UDP-3-O-acylglucosamine N-acyltransferase (Burkholderia pseudomallei (strain 668)).